The following is a 512-amino-acid chain: Nephrocan (512 aa).

The signal sequence occupies residues 1–19 (MHPLWAFLLGLSLTNGLSA). The region spanning 20-44 (NCPGRCSCDSMQSVQCYRLMELPSG) is the LRRNT domain. 17 LRR repeats span residues 45-69 (IPSTTKRLYISHSRIQHLQLSNFTG), 71-93 (LALEDFILLASGTESIENDTFKT), 94-117 (LSTLKTLELWKNKLRQVPSALPAN), 119-138 (EVLKLNDNAICALRGSEFEG), 139-162 (LKNLKVLELKNNLISSLSPSMLSP), 164-185 (ASLQSLMVDGNNIESVVGPLSL), 186-208 (PHLKYMSMENNQLHLIPGNVFTS), 210-232 (QNLQFLSFSGNFLTKIPINLPKS), 234-253 (LSLKMERNQLKVVRFRDMKH), 254-276 (LENLSHLYLSENFLSSIDGAQQL), 277-299 (TNLTTLEVSQNQLQMLPPRLPSR), 301-320 (QKLDCSSNFIQRVTAPEFQD), 321-344 (LRDLKHLFLDNNVVSLFEAGALQR), 346-371 (SQLSNLALEQNLLLSIPLRLPKTLAR), 373-389 (DLKGNAIQDMAERELRD), 390-413 (LKQLQVLNLRNNRISALDFKALEG), and 415-442 (PRLRHLYLDGNPWNCTCSLLRAREVLKA). Asn66 carries N-linked (GlcNAc...) asparagine glycosylation. Positions 474–484 (EHHLQQSEKSK) are enriched in basic and acidic residues. The segment at 474 to 512 (EHHLQQSEKSKETKKKPKPEDSSSIRLNMDDDDDDYEID) is disordered. A compositionally biased stretch (acidic residues) spans 503 to 512 (DDDDDDYEID).

This sequence belongs to the small leucine-rich proteoglycan (SLRP) family. N-glycosylated. In terms of tissue distribution, expressed at highest levels in the kidney, where it is primarily detected in the epithelial cells of distal tubules and collecting ducts, and more weakly in proximal epithelial cells. Expressed at lower levels in heart and lung (at protein level). Detected in skeletal muscle.

It localises to the secreted. May inhibit TGF-beta signaling. In Mus musculus (Mouse), this protein is Nephrocan.